We begin with the raw amino-acid sequence, 101 residues long: Small ribosomal subunit protein uS17 (101 aa).

Belongs to the universal ribosomal protein uS17 family. Part of the 30S ribosomal subunit.

Functionally, one of the primary rRNA binding proteins, it binds specifically to the 5'-end of 16S ribosomal RNA. This Koribacter versatilis (strain Ellin345) protein is Small ribosomal subunit protein uS17.